The following is a 250-amino-acid chain: MELKVDTHTHTYASGHAYSTLIENAKSAKENGLDMFCTTDHAESMPGAPHYWFFSNQKILPRFLEGVAIIRGVESNIMNTQGDIDIPESVDRNLDWVIASFHEPVFRPADSATHTEALLNIIKNGRVDALGHLGNPNFDFDFEVVLKCAKEHYVAIEINNTTLKGNSRVGSVDRCHQIAQIGKDLGVFFTTGSDAHFCHDVGNLSLVSELMDRVGIDSSKVITHSAQQFLAFLELRGRKPIAEYDEIRNA.

Zn(2+) is bound by residues His-8, His-10, His-16, His-41, Glu-74, His-102, His-132, Asp-194, and His-196.

This sequence belongs to the PHP family. Zn(2+) is required as a cofactor.

In Vibrio campbellii (strain ATCC BAA-1116), this protein is Probable phosphatase VIBHAR_04983.